The primary structure comprises 449 residues: Phosphoglucosamine mutase (449 aa).

Residue serine 101 is the Phosphoserine intermediate of the active site. Residues serine 101, aspartate 240, aspartate 242, and aspartate 244 each coordinate Mg(2+). At serine 101 the chain carries Phosphoserine.

The protein belongs to the phosphohexose mutase family. Mg(2+) serves as cofactor. In terms of processing, activated by phosphorylation.

It catalyses the reaction alpha-D-glucosamine 1-phosphate = D-glucosamine 6-phosphate. Its function is as follows. Catalyzes the conversion of glucosamine-6-phosphate to glucosamine-1-phosphate. The sequence is that of Phosphoglucosamine mutase from Streptococcus suis (strain 98HAH33).